The following is a 255-amino-acid chain: 4-hydroxy-tetrahydrodipicolinate reductase (255 aa).

NAD(+)-binding positions include 9–14, 89–91, and 115–118; these read GFKGKM, GTT, and APNF. Catalysis depends on His-145, which acts as the Proton donor/acceptor. His-146 contacts (S)-2,3,4,5-tetrahydrodipicolinate. Lys-149 functions as the Proton donor in the catalytic mechanism. 155–156 is a binding site for (S)-2,3,4,5-tetrahydrodipicolinate; that stretch reads GT.

This sequence belongs to the DapB family.

The protein resides in the cytoplasm. The enzyme catalyses (S)-2,3,4,5-tetrahydrodipicolinate + NAD(+) + H2O = (2S,4S)-4-hydroxy-2,3,4,5-tetrahydrodipicolinate + NADH + H(+). It catalyses the reaction (S)-2,3,4,5-tetrahydrodipicolinate + NADP(+) + H2O = (2S,4S)-4-hydroxy-2,3,4,5-tetrahydrodipicolinate + NADPH + H(+). It participates in amino-acid biosynthesis; L-lysine biosynthesis via DAP pathway; (S)-tetrahydrodipicolinate from L-aspartate: step 4/4. Its function is as follows. Catalyzes the conversion of 4-hydroxy-tetrahydrodipicolinate (HTPA) to tetrahydrodipicolinate. This chain is 4-hydroxy-tetrahydrodipicolinate reductase, found in Streptococcus gordonii (strain Challis / ATCC 35105 / BCRC 15272 / CH1 / DL1 / V288).